Here is a 127-residue protein sequence, read N- to C-terminus: Longitudinals lacking protein-like (127 aa).

Positions Thr-33 to Gln-98 constitute a BTB domain.

The BTB domain interacts with the BTB domain of Trl in vitro. Found in a Pc-containing complex.

It is found in the nucleus. Its function is as follows. Required, together with Trl, for maintaining the repressed state of target genes including homeotic genes Scr and Ubx. May also be involved in the activation of homeotic genes. Binds to a DNA Polycomb response element (PRE) at the bithorax complex. Also binds to polytene chromosomes at several hundred sites, many of which are shared with Trl and ph-p. Required during embryonic development. This Drosophila melanogaster (Fruit fly) protein is Longitudinals lacking protein-like.